Reading from the N-terminus, the 318-residue chain is Beta-sarcoglycan (318 aa).

A disordered region spans residues 1–32; the sequence is MAAAAAAAAEQQSSNGPVKKSMREKAVERRSV. At 1 to 65 the chain is on the cytoplasmic side; the sequence is MAAAAAAAAE…GLRGRKGNLA (65 aa). Basic and acidic residues predominate over residues 21 to 32; that stretch reads SMREKAVERRSV. The chain crosses the membrane as a helical; Signal-anchor for type II membrane protein span at residues 66-86; it reads ICVIILLFILAVINLIITLVI. The Extracellular portion of the chain corresponds to 87-318; the sequence is WAVIRIGPNG…ISDNPCGNTH (232 aa). Residues N158, N211, and N258 are each glycosylated (N-linked (GlcNAc...) asparagine). Disulfide bonds link C288-C314 and C290-C307.

Belongs to the sarcoglycan beta/delta/gamma/zeta family. Cross-link to form 2 major subcomplexes: one consisting of SGCB, SGCD and SGCG and the other consisting of SGCB and SGCD. The association between SGCB and SGCG is particularly strong while SGCA is loosely associated with the other sarcoglycans. Post-translationally, disulfide bonds are present. In terms of tissue distribution, highest expression in heart and skeletal muscle. Low expression in brain, kidney, placenta, pancreas and lung. High expression in fetal brain. Also found in fetal lung, kidney and liver.

The protein localises to the cell membrane. Its subcellular location is the sarcolemma. The protein resides in the cytoplasm. It is found in the cytoskeleton. In terms of biological role, component of the sarcoglycan complex, a subcomplex of the dystrophin-glycoprotein complex which forms a link between the F-actin cytoskeleton and the extracellular matrix. This is Beta-sarcoglycan (SGCB) from Homo sapiens (Human).